The following is a 1004-amino-acid chain: MGLPLPLLLLLLLPPPLPRALPAPASARGRQLPGRLGCLFEDGLCGSLETCVNDGVFGRCQKVPALDTYRYEVSPGALLHLRIILQKLSRTGFTWQDDYTQRVIAQELSNLPKAYLWHEEASSPARSLQQNADNEKWFSLESEVALAKTLRRYLPYLELLSQAPTANAHPRIDHETRPVKGEDSSPENILTYVAHTSALTYPPATRVKYPDNLLRPLSRLQPDELSPKVDSDIDKQKLIAALGAYTAQRPPGENDPEPRYLVHSPMRAPRPFAAPALSQRWPLPPGDSKDSLSMGDDTLLRSLLKDLQQQAEVDRLGSLKLEEQADSIAGAIQSDPVEGSQESHGRGAEGQLREQADAPEEMLQDHRLPEVDDPAAYKEVSRLSFKLGDLLKDHGSPLLPEAPLLEKSSRAEMKKSEQPEEVLSSEEETAGVEHVKSRTYSKDLLERKPNSEPQPWRLEDQFQNRAPEVWEDEQNLKLAAQGPPSGGLQLEVQPSEEEQQGYILTGNNPLSPEKGKQLMDEVAHLLRVPSSFFADVKVLGPAVIFKVSANIQNMTTADVTKAAVDNKDELEKATGLTILQSGIRPKGKLKLLPHPEEQEDSTKFIVLTFLSIACILAVLLASSLAYCLRHNSHYKLKEKLSGLGADPSADATEAYQELCRQRMAVRPQDHSEGPHTSRINSVSSQLSDGPMPSPSARSSTSSWSEEPAQSNMDISTGHMILAYMEDHLKNKNRLEKEWEALCAYQAEPDSSLVAQREENAPKNRSLAVLTYDHSRILLKSENSHSNSDYINASPIMDHDPRNPAYIATQGPLPATVADFWQMVWESGCAVIVMLTPLSENGVRQCHHYWPDEGSNVYHVYEVNLVSEHIWCQDFLVRSFYLKNLQTNETRTVTQFHFLSWYDQGVPSSTRSLLDFRRKVNKCYRGRSCPIIVHCSDGAGRSGTYVLIDMVLNKMAKGAKEIDIAATLEHLRDQRPGMVQTKEQFEFALTAVAEEVNAILKALPQ.

The signal sequence occupies residues 1–27 (MGLPLPLLLLLLLPPPLPRALPAPASA). Residues 1 to 409 (MGLPLPLLLL…PEAPLLEKSS (409 aa)) are involved in localization to secretory granules; interaction with CPE. The Extracellular portion of the chain corresponds to 28 to 603 (RGRQLPGRLG…HPEEQEDSTK (576 aa)). Arginine 259 is subject to Omega-N-methylarginine. Disordered regions lie at residues 274-294 (APAL…SLSM), 333-360 (QSDP…DAPE), and 393-459 (DHGS…WRLE). Position 340 is a phosphoserine (serine 340). Composition is skewed to basic and acidic residues over residues 341 to 356 (QESH…REQA) and 407 to 418 (KSSRAEMKKSEQ). The segment covering 419–430 (PEEVLSSEEETA) has biased composition (acidic residues). Phosphoserine is present on residues serine 424 and serine 425. Over residues 431–450 (GVEHVKSRTYSKDLLERKPN) the composition is skewed to basic and acidic residues. A glycan (N-linked (GlcNAc...) asparagine) is linked at asparagine 553. A helical membrane pass occupies residues 604–624 (FIVLTFLSIACILAVLLASSL). The Cytoplasmic segment spans residues 625 to 1004 (AYCLRHNSHY…VNAILKALPQ (380 aa)). The Tyrosine-based internalization motif signature appears at 655–664 (YQELCRQRMA). Residues 665–710 (VRPQDHSEGPHTSRINSVSSQLSDGPMPSPSARSSTSSWSEEPAQS) are disordered. Residues 677–687 (SRINSVSSQLS) show a composition bias toward polar residues. Serine 681 is modified (phosphoserine; by PKA). Serine 687 is modified (phosphoserine). The span at 694-710 (PSARSSTSSWSEEPAQS) shows a compositional bias: low complexity. Position 700 is a phosphothreonine; by PKA (threonine 700). The 261-residue stretch at 734–994 (LEKEWEALCA…EFALTAVAEE (261 aa)) folds into the Tyrosine-protein phosphatase domain. Substrate-binding positions include aspartate 902 and 934 to 940 (CSDGAGR). Cysteine 934 acts as the Phosphocysteine intermediate in catalysis. Lysine 959 is modified (N6-acetyllysine). Substrate is bound at residue glutamine 979. The Leucine-based sorting signal motif lies at 993-999 (EEVNAIL).

It belongs to the protein-tyrosine phosphatase family. Receptor class 8 subfamily. As to quaternary structure, self-associates. Interacts (via cytoplasmic domain) with PTPRN (via cytoplasmic domain). Interacts (precursor form) with CPE. Interacts with HAP1. Interacts with AP2A1 or AP2A2 and AP1G1; indicative for an association with adaptor protein complex 2 (AP-2) and adaptor protein complex 1 (AP-1). Interacts with AP2M1; indicative for an association with adaptor protein complex 2 (AP-2). Interacts with MYO5A. In terms of processing, subject to proteolytic cleavage at multiple sites.

It localises to the cytoplasmic vesicle. The protein resides in the secretory vesicle membrane. It is found in the secretory vesicle. The protein localises to the synaptic vesicle membrane. It carries out the reaction O-phospho-L-tyrosyl-[protein] + H2O = L-tyrosyl-[protein] + phosphate. Functionally, plays a role in vesicle-mediated secretory processes. Required for normal accumulation of secretory vesicles in hippocampus, pituitary and pancreatic islets. Required for the accumulation of normal levels of insulin-containing vesicles and preventing their degradation. Plays a role in insulin secretion in response to glucose stimuli. Required for normal accumulation of the neurotransmitters norepinephrine, dopamine and serotonin in the brain. In females, but not in males, required for normal accumulation and secretion of pituitary hormones, such as luteinizing hormone (LH) and follicle-stimulating hormone (FSH). Required to maintain normal levels of renin expression and renin release. May regulate catalytic active protein-tyrosine phosphatases such as PTPRA through dimerization. Has phosphatidylinositol phosphatase activity; the PIPase activity is involved in its ability to regulate insulin secretion. Can dephosphorylate phosphatidylinositol 4,5-biphosphate, phosphatidylinositol 5-phosphate and phosphatidylinositol 3-phosphate. Regulates PI(4,5)P2 level in the plasma membrane and localization of cofilin at the plasma membrane and thus is indirectly involved in regulation of actin dynamics related to cell migration and metastasis; upon hydrolysis of PI(4,5)P2 cofilin is released from the plasma membrane and acts in the cytoplasm in severing F-actin filaments. This chain is Receptor-type tyrosine-protein phosphatase N2 (Ptprn2), found in Rattus norvegicus (Rat).